Reading from the N-terminus, the 445-residue chain is Asparagine--tRNA ligase (445 aa).

This sequence belongs to the class-II aminoacyl-tRNA synthetase family. In terms of assembly, homodimer.

It localises to the cytoplasm. It catalyses the reaction tRNA(Asn) + L-asparagine + ATP = L-asparaginyl-tRNA(Asn) + AMP + diphosphate + H(+). The sequence is that of Asparagine--tRNA ligase from Deinococcus deserti (strain DSM 17065 / CIP 109153 / LMG 22923 / VCD115).